Consider the following 132-residue polypeptide: Small ribosomal subunit protein uS8 (132 aa).

Belongs to the universal ribosomal protein uS8 family. In terms of assembly, part of the 30S ribosomal subunit. Contacts proteins S5 and S12.

One of the primary rRNA binding proteins, it binds directly to 16S rRNA central domain where it helps coordinate assembly of the platform of the 30S subunit. In Brucella ovis (strain ATCC 25840 / 63/290 / NCTC 10512), this protein is Small ribosomal subunit protein uS8.